Consider the following 338-residue polypeptide: Mitochondrial glutathione transporter SLC25A40 (338 aa).

Solcar repeat units follow at residues Val-13–Leu-131, Asn-139–Trp-223, and Pro-233–Phe-327. Transmembrane regions (helical) follow at residues Met-19–Val-39, Leu-103–Thr-123, Ile-145–Ile-165, Trp-199–Leu-220, Phe-239–Val-259, and Gly-298–Ile-318.

It belongs to the mitochondrial carrier (TC 2.A.29) family.

Its subcellular location is the mitochondrion inner membrane. The catalysed reaction is glutathione(in) = glutathione(out). Probable mitochondrial transporter required for glutathione import into mitochondria. Glutathione, which plays key roles in oxidative metabolism, is produced exclusively in the cytosol and is imported in many organelles. Mitochondrial glutathione is required for the activity and stability of proteins containing iron-sulfur clusters, as well as erythropoiesis. The polypeptide is Mitochondrial glutathione transporter SLC25A40 (Bos taurus (Bovine)).